We begin with the raw amino-acid sequence, 145 residues long: Early nodulin-like protein 21 (145 aa).

A signal peptide spans 1-17; sequence MFLWLVIVLTISASVSS. Positions 18 to 116 constitute a Phytocyanin domain; that stretch reads YEHKLNWVVP…GQKMIVEVIS (99 aa). 2 N-linked (GlcNAc...) asparagine glycosylation sites follow: N30 and N71. C70 and C104 are disulfide-bonded. S116 is lipidated: GPI-anchor amidated serine. A propeptide spans 117 to 145 (removed in mature form); it reads RDHTTTSAAPPAAFAVLLCFFSLSLYFVA.

This sequence belongs to the early nodulin-like (ENODL) family. As to expression, mostly expressed in leaves and flowers, and, to a lower extent, in roots and stems, but barely in seedlings and seeds.

It localises to the cell membrane. In terms of biological role, may act as a carbohydrate transporter. This is Early nodulin-like protein 21 from Arabidopsis thaliana (Mouse-ear cress).